We begin with the raw amino-acid sequence, 87 residues long: Large ribosomal subunit protein bL31B (87 aa).

Belongs to the bacterial ribosomal protein bL31 family. Type B subfamily. Part of the 50S ribosomal subunit.

This chain is Large ribosomal subunit protein bL31B, found in Staphylococcus carnosus (strain TM300).